The following is a 369-amino-acid chain: Glutamate 5-kinase (369 aa).

Lys14 is a binding site for ATP. 3 residues coordinate substrate: Ser56, Asp143, and Asn155. ATP is bound by residues 175–176 (SD) and 215–221 (TGGMASK). The PUA domain occupies 277–351 (AGKIRLDDGA…GMQTQDLPDG (75 aa)).

This sequence belongs to the glutamate 5-kinase family.

The protein resides in the cytoplasm. The catalysed reaction is L-glutamate + ATP = L-glutamyl 5-phosphate + ADP. It functions in the pathway amino-acid biosynthesis; L-proline biosynthesis; L-glutamate 5-semialdehyde from L-glutamate: step 1/2. Functionally, catalyzes the transfer of a phosphate group to glutamate to form L-glutamate 5-phosphate. The sequence is that of Glutamate 5-kinase from Corynebacterium glutamicum (strain ATCC 13032 / DSM 20300 / JCM 1318 / BCRC 11384 / CCUG 27702 / LMG 3730 / NBRC 12168 / NCIMB 10025 / NRRL B-2784 / 534).